We begin with the raw amino-acid sequence, 257 residues long: 3-deoxy-manno-octulosonate cytidylyltransferase (257 aa).

This sequence belongs to the KdsB family.

It is found in the cytoplasm. It carries out the reaction 3-deoxy-alpha-D-manno-oct-2-ulosonate + CTP = CMP-3-deoxy-beta-D-manno-octulosonate + diphosphate. Its pathway is nucleotide-sugar biosynthesis; CMP-3-deoxy-D-manno-octulosonate biosynthesis; CMP-3-deoxy-D-manno-octulosonate from 3-deoxy-D-manno-octulosonate and CTP: step 1/1. The protein operates within bacterial outer membrane biogenesis; lipopolysaccharide biosynthesis. In terms of biological role, activates KDO (a required 8-carbon sugar) for incorporation into bacterial lipopolysaccharide in Gram-negative bacteria. This chain is 3-deoxy-manno-octulosonate cytidylyltransferase, found in Stenotrophomonas maltophilia (strain R551-3).